The primary structure comprises 255 residues: 1-(5-phosphoribosyl)-5-[(5-phosphoribosylamino)methylideneamino] imidazole-4-carboxamide isomerase (255 aa).

D8 functions as the Proton acceptor in the catalytic mechanism. The Proton donor role is filled by D129.

This sequence belongs to the HisA/HisF family.

It is found in the cytoplasm. The catalysed reaction is 1-(5-phospho-beta-D-ribosyl)-5-[(5-phospho-beta-D-ribosylamino)methylideneamino]imidazole-4-carboxamide = 5-[(5-phospho-1-deoxy-D-ribulos-1-ylimino)methylamino]-1-(5-phospho-beta-D-ribosyl)imidazole-4-carboxamide. It functions in the pathway amino-acid biosynthesis; L-histidine biosynthesis; L-histidine from 5-phospho-alpha-D-ribose 1-diphosphate: step 4/9. This chain is 1-(5-phosphoribosyl)-5-[(5-phosphoribosylamino)methylideneamino] imidazole-4-carboxamide isomerase, found in Prochlorococcus marinus (strain MIT 9301).